Consider the following 48-residue polypeptide: uncharacterized protein (48 aa).

This is an uncharacterized protein from Acidianus convivator (ATV).